A 612-amino-acid polypeptide reads, in one-letter code: MPAYRSRTTTHGRNMAGARGLWRATGMKDSDFGKPIIAVVNSFTQFVPGHVHLKDLGQLVAREIEAAGGVAKEFNTIAVDDGIAMGHDGMLYSLPSRELIADSVEYMVNAHCADAMVCISNCDKITPGMLMASLRLNIPTVFVSGGPMEAGKVIMHGKKVALDLVDAMVAAADDKISDEDVAVIERSACPTCGSCSGMFTANSMNCLTEALGLSLPGNGSTLATHSDRKELFLEAGRRVVALAKRYYEQDDVTALPRTIASKGAFENAMALDIAMGGSTNTVLHILAAAHEGEIDFTMDDIDRLSRRVPCLSKVAPAKADVHMEDVHRAGGIMAILGELNRAGLLNADLPTVHAPTLGEALAQWDIAVTDNKAALELFSAAPGGVPTQVAFSQSARWEELDLDREKGVIRDAQHPFSKDGGLAVLKGNLALDGCIVKTAGVDESILKFSGPAKVFESQDSAVKGILSNQVVAGDVVVIRYEGPKGGPGMQEMLYPTSYLKSKGLGKACALITDGRFSGGTSGLSIGHASPEAANGGTIGLVREGDMIDIDIPNRTISLRVDEAELAARREAQNAKGWFPAEKRKRNVTTALKAYAAFATSADRGAVRDLGGK.

Position 81 (Asp-81) interacts with Mg(2+). Residue Cys-122 participates in [2Fe-2S] cluster binding. Residues Asp-123 and Lys-124 each contribute to the Mg(2+) site. An N6-carboxylysine modification is found at Lys-124. [2Fe-2S] cluster is bound at residue Cys-195. Residue Glu-491 coordinates Mg(2+). The active-site Proton acceptor is Ser-517.

The protein belongs to the IlvD/Edd family. Homodimer. The cofactor is [2Fe-2S] cluster. Requires Mg(2+) as cofactor.

It catalyses the reaction (2R)-2,3-dihydroxy-3-methylbutanoate = 3-methyl-2-oxobutanoate + H2O. The catalysed reaction is (2R,3R)-2,3-dihydroxy-3-methylpentanoate = (S)-3-methyl-2-oxopentanoate + H2O. Its pathway is amino-acid biosynthesis; L-isoleucine biosynthesis; L-isoleucine from 2-oxobutanoate: step 3/4. It participates in amino-acid biosynthesis; L-valine biosynthesis; L-valine from pyruvate: step 3/4. Its function is as follows. Functions in the biosynthesis of branched-chain amino acids. Catalyzes the dehydration of (2R,3R)-2,3-dihydroxy-3-methylpentanoate (2,3-dihydroxy-3-methylvalerate) into 2-oxo-3-methylpentanoate (2-oxo-3-methylvalerate) and of (2R)-2,3-dihydroxy-3-methylbutanoate (2,3-dihydroxyisovalerate) into 2-oxo-3-methylbutanoate (2-oxoisovalerate), the penultimate precursor to L-isoleucine and L-valine, respectively. This chain is Dihydroxy-acid dehydratase, found in Rhizobium rhizogenes (strain K84 / ATCC BAA-868) (Agrobacterium radiobacter).